Consider the following 68-residue polypeptide: Large ribosomal subunit protein uL29 (68 aa).

Belongs to the universal ribosomal protein uL29 family.

The protein is Large ribosomal subunit protein uL29 of Rhodopseudomonas palustris (strain BisA53).